Here is a 301-residue protein sequence, read N- to C-terminus: tRNA dimethylallyltransferase (301 aa).

An ATP-binding site is contributed by 12-19; the sequence is GPTAVGKT. Residue 14–19 coordinates substrate; that stretch reads TAVGKT. Residues 37–40 form an interaction with substrate tRNA region; that stretch reads DSQQ.

This sequence belongs to the IPP transferase family. As to quaternary structure, monomer. It depends on Mg(2+) as a cofactor.

The catalysed reaction is adenosine(37) in tRNA + dimethylallyl diphosphate = N(6)-dimethylallyladenosine(37) in tRNA + diphosphate. Functionally, catalyzes the transfer of a dimethylallyl group onto the adenine at position 37 in tRNAs that read codons beginning with uridine, leading to the formation of N6-(dimethylallyl)adenosine (i(6)A). This chain is tRNA dimethylallyltransferase, found in Streptococcus uberis (strain ATCC BAA-854 / 0140J).